A 321-amino-acid polypeptide reads, in one-letter code: Quinol oxidase subunit 2 (321 aa).

The signal sequence occupies residues 1–25; that stretch reads MIFLFRALKPLLVLALLTVVFVLGG. Cys26 is lipidated: N-palmitoyl cysteine. A lipid anchor (S-diacylglycerol cysteine) is attached at Cys26. Transmembrane regions (helical) follow at residues 49-69 and 90-110; these read SIGFMLFIVGVVFVLFTIILV and TFLEVVWTVIPILIVIALSVP. A disordered region spans residues 294-321; the sequence is QAVSPHSKTDPFENVKENEFKKSDDTEE. Residues 300–321 show a composition bias toward basic and acidic residues; the sequence is SKTDPFENVKENEFKKSDDTEE.

Belongs to the cytochrome c oxidase subunit 2 family.

The protein localises to the cell membrane. It catalyses the reaction 2 a quinol + O2 = 2 a quinone + 2 H2O. Its function is as follows. Catalyzes quinol oxidation with the concomitant reduction of oxygen to water. Major component for energy conversion during vegetative growth. Subunit II transfers the electrons from a quinol to the binuclear center of the catalytic subunit I. The sequence is that of Quinol oxidase subunit 2 (qoxA) from Bacillus spizizenii (strain ATCC 23059 / NRRL B-14472 / W23) (Bacillus subtilis subsp. spizizenii).